An 87-amino-acid chain; its full sequence is Putative defensin-like protein 84 (87 aa).

The first 27 residues, 1-27 (MTTKMVSSHRLLTLMVFALLLIPMISG), serve as a signal peptide directing secretion. Disulfide bonds link Cys-32/Cys-73, Cys-36/Cys-54, Cys-42/Cys-71, and Cys-46/Cys-72.

This sequence belongs to the DEFL family.

It is found in the secreted. The sequence is that of Putative defensin-like protein 84 from Arabidopsis thaliana (Mouse-ear cress).